A 621-amino-acid chain; its full sequence is DEAD-box ATP-dependent RNA helicase 39 (621 aa).

Positions 112–140 (ENFQELGLSEEVMGALQELNIEVPTEIQC) match the Q motif motif. One can recognise a Helicase ATP-binding domain in the interval 143-330 (IPAVMERKSV…DEEFQGIEHL (188 aa)). 156-163 (SHTGSGKT) lines the ATP pocket. The DEAD box motif lies at 270-273 (DEAD). The region spanning 355-505 (KLEALLQVLE…LESLTTDNVR (151 aa)) is the Helicase C-terminal domain. The segment at 497–621 (ESLTTDNVRR…RGKSSSARAS (125 aa)) is disordered. The span at 503-537 (NVRRDAARTHITQEKGRSVKQIREVSKQRNSRDKP) shows a compositional bias: basic and acidic residues. Positions 555–572 (KSSSSSFSKPRKASSPPE) are enriched in low complexity.

The protein belongs to the DEAD box helicase family.

The catalysed reaction is ATP + H2O = ADP + phosphate + H(+). This chain is DEAD-box ATP-dependent RNA helicase 39 (RH39), found in Arabidopsis thaliana (Mouse-ear cress).